The sequence spans 283 residues: S-methyl-5'-thioadenosine phosphorylase (283 aa).

Thr18 is a phosphate binding site. At Lys51 the chain carries N6-acetyllysine. Residues 60 to 61 (RH) and 93 to 94 (TA) each bind phosphate. Met196 contributes to the substrate binding site. Residue Thr197 participates in phosphate binding. Residue 220–222 (DYD) coordinates substrate.

The protein belongs to the PNP/MTAP phosphorylase family. MTAP subfamily. As to quaternary structure, homotrimer.

The protein resides in the cytoplasm. Its subcellular location is the nucleus. It catalyses the reaction S-methyl-5'-thioadenosine + phosphate = 5-(methylsulfanyl)-alpha-D-ribose 1-phosphate + adenine. The protein operates within amino-acid biosynthesis; L-methionine biosynthesis via salvage pathway; S-methyl-5-thio-alpha-D-ribose 1-phosphate from S-methyl-5'-thioadenosine (phosphorylase route): step 1/1. Functionally, catalyzes the reversible phosphorylation of S-methyl-5'-thioadenosine (MTA) to adenine and 5-methylthioribose-1-phosphate. Involved in the breakdown of MTA, a major by-product of polyamine biosynthesis. Responsible for the first step in the methionine salvage pathway after MTA has been generated from S-adenosylmethionine. Has broad substrate specificity with 6-aminopurine nucleosides as preferred substrates. The protein is S-methyl-5'-thioadenosine phosphorylase (Mtap) of Mus musculus (Mouse).